Reading from the N-terminus, the 694-residue chain is Polyphosphate kinase (694 aa).

Asparagine 45 contacts ATP. Residues arginine 367 and arginine 397 each coordinate Mg(2+). Histidine 427 serves as the catalytic Phosphohistidine intermediate. Residues tyrosine 460, arginine 553, and histidine 580 each coordinate ATP.

It belongs to the polyphosphate kinase 1 (PPK1) family. Mg(2+) is required as a cofactor. In terms of processing, an intermediate of this reaction is the autophosphorylated ppk in which a phosphate is covalently linked to a histidine residue through a N-P bond.

The catalysed reaction is [phosphate](n) + ATP = [phosphate](n+1) + ADP. Functionally, catalyzes the reversible transfer of the terminal phosphate of ATP to form a long-chain polyphosphate (polyP). This is Polyphosphate kinase from Campylobacter jejuni (strain RM1221).